The following is a 700-amino-acid chain: ABC transporter B family member 26, chloroplastic (700 aa).

Residues 1-59 (MAQQVLGCTSRPIRVSLHRCSVITTSDTIRRKNLRFVRNPRLSFSLQSSTRNYRLPSIN) constitute a chloroplast transit peptide. A run of 3 helical transmembrane segments spans residues 137 to 157 (WVIF…ITIP), 182 to 202 (LVTL…FFGI), and 268 to 288 (LIYL…ICCI). The 283-residue stretch at 139 to 421 (IFAAFSTLIV…VGDNLSSLMQ (283 aa)) folds into the ABC transmembrane type-1 domain. The 240-residue stretch at 455–694 (IEFVDVSFSY…DGLYARLTKR (240 aa)) folds into the ABC transporter domain. 490 to 497 (GLSGSGKS) is an ATP binding site.

This sequence belongs to the ABC transporter superfamily. ABCB family. Multidrug resistance exporter (TC 3.A.1.201) subfamily.

It is found in the plastid. It localises to the chloroplast membrane. This is ABC transporter B family member 26, chloroplastic (ABCB26) from Arabidopsis thaliana (Mouse-ear cress).